We begin with the raw amino-acid sequence, 250 residues long: Anti-sigma-L factor RslA (250 aa).

Residues 1–115 (MTMPLRGLGP…VHRRRRRTRL (115 aa)) lie on the Cytoplasmic side of the membrane. A helical transmembrane segment spans residues 116-136 (ITWVASSAAAAVLAIGVLVGV). Topologically, residues 137–250 (QGHSAAPQRA…TGQVLLQRSL (114 aa)) are extracellular.

As to quaternary structure, interacts with ECF RNA polymerase sigma factor SigL; this should inhibit the interaction of SigL with the RNA polymerase catalytic core. Post-translationally, probably cleaved within the membrane by Rip1 near the cytoplasmic membrane interface.

The protein localises to the cell membrane. In terms of biological role, an anti-sigma factor for extracytoplasmic function (ECF) sigma factor SigL. ECF sigma factors are held in an inactive form by an anti-sigma factor until released by regulated intramembrane proteolysis (RIP). RIP occurs when an extracytoplasmic signal triggers a concerted proteolytic cascade to transmit information and elicit cellular responses. The membrane-spanning regulatory substrate protein is first cut extracytoplasmically (site-1 protease, S1P), then within the membrane itself (site-2 protease, S2P, Rip1), while cytoplasmic proteases finish degrading the regulatory protein, liberating the sigma factor. The chain is Anti-sigma-L factor RslA (rslA) from Mycobacterium tuberculosis (strain ATCC 35801 / TMC 107 / Erdman).